The sequence spans 78 residues: MRYQTVFWILLIALCTVNPAKIQDVASYGGTVRLTDSGRAKCSRKTWPCETSEDCCDKNCSDTFWTCQLGYGCSRVCV.

The N-terminal stretch at 1 to 19 (MRYQTVFWILLIALCTVNP) is a signal peptide. 4 cysteine pairs are disulfide-bonded: Cys-42-Cys-56, Cys-49-Cys-60, Cys-55-Cys-77, and Cys-67-Cys-73.

Belongs to the neurotoxin 13 (insecticidal toxin ABC) family. 03 (JZTX-59) subfamily. In terms of tissue distribution, expressed by the venom gland.

The protein localises to the secreted. In terms of biological role, probable ion channel inhibitor. The protein is U29-theraphotoxin-Cg1a of Chilobrachys guangxiensis (Chinese earth tiger tarantula).